Here is a 286-residue protein sequence, read N- to C-terminus: Ribosomal RNA small subunit methyltransferase H (286 aa).

Residues 17–19 (AGH), D36, F63, D84, and Q91 each bind S-adenosyl-L-methionine.

The protein belongs to the methyltransferase superfamily. RsmH family.

The protein resides in the cytoplasm. It carries out the reaction cytidine(1402) in 16S rRNA + S-adenosyl-L-methionine = N(4)-methylcytidine(1402) in 16S rRNA + S-adenosyl-L-homocysteine + H(+). Its function is as follows. Specifically methylates the N4 position of cytidine in position 1402 (C1402) of 16S rRNA. The protein is Ribosomal RNA small subunit methyltransferase H of Metamycoplasma arthritidis (strain 158L3-1) (Mycoplasma arthritidis).